Reading from the N-terminus, the 107-residue chain is RecQ-mediated genome instability protein 2 homolog (107 aa).

This sequence belongs to the RMI2 family. In terms of assembly, component of the RMI complex, containing at least top-3, rmh-1 and rmh-2. Component of the BTR double Holliday Junction dissolution complex composed of at least him-6, top-3, rmh-1 and rmif-2, which is involved in double strand break repair in the germline. Interacts with rmh-1; the interaction is direct and is required for mutual stability and localization at nuclear foci. In terms of tissue distribution, expressed in the germline.

The protein localises to the nucleus. In terms of biological role, essential component of the RMI complex, a complex that plays an important role in the processing of homologous recombination intermediates. Component of the BTR double Holliday Junction dissolution complex, which is involved in homologous recombination during meiotic double strand break in the germline. Plays a role in double strand break repair by positively regulating the accumulation of rad-51 at double strand breaks. Stabilizes and positively regulates the localization of the BTR double Holliday Junction dissolution complex components rmh-1, him-6 and top-3 at nuclear foci during meiotic recombination. Positively regulates meiotic recombination, chiasma formation, and chromosome segregation in meiosis. Positively regulates DNA crossover formation and positioning on chromosome arms (away from the chromosome center) during homologous recombination. The sequence is that of RecQ-mediated genome instability protein 2 homolog from Caenorhabditis elegans.